The following is a 228-amino-acid chain: Orotidine 5'-phosphate decarboxylase (228 aa).

Substrate is bound by residues Asp-11, Lys-33, 60–69 (DLKLHDIPNT), Thr-117, Arg-178, Gln-186, Gly-206, and Arg-207. Lys-62 functions as the Proton donor in the catalytic mechanism.

Belongs to the OMP decarboxylase family. Type 1 subfamily. As to quaternary structure, homodimer.

The catalysed reaction is orotidine 5'-phosphate + H(+) = UMP + CO2. The protein operates within pyrimidine metabolism; UMP biosynthesis via de novo pathway; UMP from orotate: step 2/2. Catalyzes the decarboxylation of orotidine 5'-monophosphate (OMP) to uridine 5'-monophosphate (UMP). The protein is Orotidine 5'-phosphate decarboxylase of Ehrlichia canis (strain Jake).